Reading from the N-terminus, the 113-residue chain is Large ribosomal subunit protein bL19 (113 aa).

Belongs to the bacterial ribosomal protein bL19 family.

Functionally, this protein is located at the 30S-50S ribosomal subunit interface and may play a role in the structure and function of the aminoacyl-tRNA binding site. The protein is Large ribosomal subunit protein bL19 of Rhodococcus jostii (strain RHA1).